We begin with the raw amino-acid sequence, 1530 residues long: Neurexin-1 (1530 aa).

Positions 1-30 are cleaved as a signal peptide; sequence MGTALVQHGGCCLLCLSLLLLGCWAELGSG. In terms of domain architecture, Laminin G-like 1 spans 31–217; sequence LEFPGAEGQW…PPNSGGGSPC (187 aa). Residues 31–1454 are Extracellular-facing; the sequence is LEFPGAEGQW…EVIRESSSTT (1424 aa). N-linked (GlcNAc...) asparagine glycosylation is found at Asn125 and Asn190. The disordered stretch occupies residues 196–219; sequence PVDGSEVKLDEEPPNSGGGSPCEA. In terms of domain architecture, EGF-like 1 spans 213–255; the sequence is GGSPCEAGDEGDGGVCLNGGVCSVVDDQAVCDCSRTGFRGKDC. 2 cysteine pairs are disulfide-bonded: Cys228–Cys243 and Cys245–Cys255. Laminin G-like domains lie at 299–496 and 503–695; these read IATF…AFKC and DPIT…KPSC. Positions 345, 362, and 430 each coordinate Ca(2+). 5 disulfides stabilise this stretch: Cys460–Cys496, Cys666–Cys695, Cys703–Cys714, Cys708–Cys723, and Cys725–Cys735. Residues 699-736 form the EGF-like 2 domain; sequence TAKPCLSNPCKNNGMCRDGWNRYVCDCSGTGYLGRSCE. Laminin G-like domains lie at 741–914 and 928–1103; these read VLSY…IDYC and DPVT…ERGC. Ca(2+) contacts are provided by Asp788 and Leu805. Asn813 is a glycosylation site (N-linked (GlcNAc...) asparagine). Arg864 provides a ligand contact to Ca(2+). 5 disulfides stabilise this stretch: Cys906-Cys914, Cys1075-Cys1103, Cys1110-Cys1121, Cys1115-Cys1130, and Cys1132-Cys1142. Residues 1106–1143 form the EGF-like 3 domain; the sequence is PSTTCQEDSCSNQGVCLQQWDGFSCDCSMTSFSGPLCN. Residues 1149–1347 enclose the Laminin G-like 6 domain; sequence YIFSKGGGQI…DANIAIVGNV (199 aa). Ca(2+) contacts are provided by Asp1199 and Val1216. A glycan (N-linked (GlcNAc...) asparagine) is linked at Asn1246. Residues Ile1298 and Asn1300 each contribute to the Ca(2+) site. A glycan (O-linked (Xyl...) (heparan sulfate) serine) is linked at Ser1408. Positions 1412-1443 are disordered; it reads PSDDEDIDPCEPSSGGLANPTRVGGREPYPGS. The chain crosses the membrane as a helical span at residues 1455-1475; the sequence is GMVVGIVAAAALCILILLYAM. At 1476–1530 the chain is on the cytoplasmic side; sequence YKYRNRDEGSYHVDESRNYISNSAQSNGAVVKEKQPSSAKSANKNKKNKDKEYYV. Positions 1497-1523 are interaction with CASK; it reads NSAQSNGAVVKEKQPSSAKSANKNKKN. Positions 1497–1530 are disordered; the sequence is NSAQSNGAVVKEKQPSSAKSANKNKKNKDKEYYV.

Belongs to the neurexin family. As to quaternary structure, interacts (via laminin G-like domain 2 and/or laminin G-like domain 6) with NLGN1 forming a heterotetramer, where one NLGN1 dimer interacts with one NRXN1 dimer. Also interacts (via laminin G-like domain 2 and/or laminin G-like domain 6) with NLGN2, NLGN3 and NLGN4L; interactions with NLGN1, NLGN2, NLGN3 and NLGN4L are calcium-dependent. Interacts (via cytoplasmic C-terminal region) with CASK (via the PDZ, SH3 and guanylate kinase-like domains). Interacts (via cytoplasmic C-terminus) with CASKIN1 and APBA1. Interacts (via laminin G-like domain 2) with NXPH1 and NXPH3. Alpha-type isoforms (neurexin-1-alpha) interact (via laminin G-like domain 2 and/or laminin G-like domain 6) with DAG1 (via alpha-dystroglycan chain). Interacts with LRRTM1, LRRTM2, LRRTM3 and LRRTM4. Interacts with SYT13 and SYTL1. Interacts with CBLN1, CBLN2 and, less avidly, with CBLN4. Interacts with CLSTN3. Alpha-type isoforms interact with alpha-latrotoxin from spider venom. In terms of processing, O-glycosylated; contains heparan sulfate. Heparan sulfate attachment is required for synapse development by mediating interactions with neuroligins and LRRTM2. Brain (neuronal synapse).

Its subcellular location is the presynaptic cell membrane. Its function is as follows. Cell surface protein involved in cell-cell-interactions, exocytosis of secretory granules and regulation of signal transmission. Function is isoform-specific. Alpha-type isoforms have a long N-terminus with six laminin G-like domains and play an important role in synaptic signal transmission. Alpha-type isoforms play a role in the regulation of calcium channel activity and Ca(2+)-triggered neurotransmitter release at synapses and at neuromuscular junctions. They play an important role in Ca(2+)-triggered exocytosis of secretory granules in pituitary gland. They may affect their functions at synapses and in endocrine cells via their interactions with proteins from the exocytotic machinery. Likewise, alpha-type isoforms play a role in regulating the activity of postsynaptic NMDA receptors, a subtype of glutamate-gated ion channels. Both alpha-type and beta-type isoforms may play a role in the formation or maintenance of synaptic junctions via their interactions (via the extracellular domains) with neuroligin family members, CBLN1 or CBLN2. In vitro, triggers the de novo formation of presynaptic structures. May be involved in specification of excitatory synapses. Alpha-type isoforms were first identified as receptors for alpha-latrotoxin from spider venom. The polypeptide is Neurexin-1 (Nrxn1) (Rattus norvegicus (Rat)).